The primary structure comprises 776 residues: Acetone carboxylase alpha subunit (776 aa).

As to quaternary structure, heterohexamer of two alpha, two beta and two gamma subunits. Fe cation is required as a cofactor. It depends on Mg(2+) as a cofactor. The cofactor is Zn(2+). In terms of processing, the N-terminus is blocked.

The enzyme catalyses acetone + hydrogencarbonate + 2 ATP + 3 H2O = acetoacetate + 2 AMP + 4 phosphate + 4 H(+). Functionally, catalyzes the carboxylation of acetone to form acetoacetate. Has a reduced activity on butanone, and no activity on 2-pentatone, 3-pentatone, 2-hexanone, chloroacetone, pyruvate, phosphoenolpyruvate, acetaldehyde, propionaldehyde and propylene oxide. The chain is Acetone carboxylase alpha subunit from Xanthobacter autotrophicus (strain ATCC BAA-1158 / Py2).